The primary structure comprises 584 residues: Eukaryotic translation initiation factor 3 subunit D (584 aa).

The segment at 118–184 (IFTRGRGQRG…KDYDKPQRNR (67 aa)) is disordered. A compositionally biased stretch (gly residues) spans 127 to 167 (GRGGQDTRGGGRQQFQRGGRGGQQYGGGGYSDRGGGRGGGA). The span at 173–184 (GWKDYDKPQRNR) shows a compositional bias: basic and acidic residues. The segment at 312–326 (ALDMVTVNENAADAP) is RNA gate. The tract at residues 563 to 584 (PANGLDDDDEGPEPEGVAEEED) is disordered. Acidic residues predominate over residues 567-584 (LDDDDEGPEPEGVAEEED).

Belongs to the eIF-3 subunit D family. Component of the eukaryotic translation initiation factor 3 (eIF-3) complex.

The protein resides in the cytoplasm. MRNA cap-binding component of the eukaryotic translation initiation factor 3 (eIF-3) complex, which is involved in protein synthesis of a specialized repertoire of mRNAs and, together with other initiation factors, stimulates binding of mRNA and methionyl-tRNAi to the 40S ribosome. The eIF-3 complex specifically targets and initiates translation of a subset of mRNAs involved in cell proliferation. In the eIF-3 complex, eif3d specifically recognizes and binds the 7-methylguanosine cap of a subset of mRNAs. The sequence is that of Eukaryotic translation initiation factor 3 subunit D from Chaetomium globosum (strain ATCC 6205 / CBS 148.51 / DSM 1962 / NBRC 6347 / NRRL 1970) (Soil fungus).